We begin with the raw amino-acid sequence, 231 residues long: MSNTPIELKGSSFTLSVVHLHEAEPKVIHQALEDKIAQAPAFLKHAPVVLNVSALEDPVNWSAMHKAVSATGLRVIGVSGCKDAQLKAEIEKMGLPILTEGKEKSPRPAPAPQAPAQNTTPVTKTRLIDTPVRSGQRIYAPQCDLIVTSHVSAGAELIADGNIHVYGMMRGRALAGASGDRETQIFCTNLMAELVSIAGEYWLSDQIPAEFYGKAARLQLVENALTVQPLN.

Residues 100–125 (EGKEKSPRPAPAPQAPAQNTTPVTKT) are disordered.

It belongs to the MinC family. As to quaternary structure, interacts with MinD and FtsZ.

Functionally, cell division inhibitor that blocks the formation of polar Z ring septums. Rapidly oscillates between the poles of the cell to destabilize FtsZ filaments that have formed before they mature into polar Z rings. Prevents FtsZ polymerization. This is Probable septum site-determining protein MinC from Escherichia coli O81 (strain ED1a).